A 326-amino-acid polypeptide reads, in one-letter code: tRNA-modifying protein YgfZ (326 aa).

Positions 27 and 189 each coordinate folate.

This sequence belongs to the tRNA-modifying YgfZ family.

The protein resides in the cytoplasm. Its function is as follows. Folate-binding protein involved in regulating the level of ATP-DnaA and in the modification of some tRNAs. It is probably a key factor in regulatory networks that act via tRNA modification, such as initiation of chromosomal replication. This is tRNA-modifying protein YgfZ from Salmonella paratyphi A (strain AKU_12601).